Consider the following 227-residue polypeptide: MVSVWWLLLLGTTVSHMVHTQEQPLLEEDTAPLDDLDVLEKAKGILIRSILEGFQEGQQNNRDLPDAMEMISKRQHPGKRFQEEIEKRQHPGKRDLEDLNLELSKRQHPGRRFVDDVEKRQHPGKREEGDWSRRYLTDDSRYLDLLSDVSRRQHPGKRVPAPLFTKRQHPGKRVTEEEGDTEFENSKEVGKRQHPGKRYDPCEGPNAYNCNSGNILPDSVEELSFGL.

A signal peptide spans 1 to 15; that stretch reads MVSVWWLLLLGTTVS. The residue at position 75 (glutamine 75) is a Pyrrolidone carboxylic acid. Proline 77 bears the Proline amide mark. Pyrrolidone carboxylic acid is present on glutamine 89. Proline 91 bears the Proline amide mark. Glutamine 107 is modified (pyrrolidone carboxylic acid). Disordered regions lie at residues 107 to 128 and 151 to 204; these read QHPG…KREE and RRQH…PCEG. Residue proline 109 is modified to Proline amide. Over residues 112 to 128 the composition is skewed to basic and acidic residues; that stretch reads RFVDDVEKRQHPGKREE. Glutamine 121 carries the post-translational modification Pyrrolidone carboxylic acid. At proline 123 the chain carries Proline amide. Glutamine 153 carries the post-translational modification Pyrrolidone carboxylic acid. At proline 155 the chain carries Proline amide. Glutamine 168 is subject to Pyrrolidone carboxylic acid. A Proline amide modification is found at proline 170. A compositionally biased stretch (basic and acidic residues) spans 184–201; sequence ENSKEVGKRQHPGKRYDP. Glutamine 193 carries the pyrrolidone carboxylic acid modification. Proline 195 is subject to Proline amide.

This sequence belongs to the TRH family.

Its subcellular location is the secreted. The protein is Pro-thyrotropin-releasing hormone-A (trh-a) of Xenopus laevis (African clawed frog).